Consider the following 333-residue polypeptide: Sphingomyelinase C (333 aa).

An N-terminal signal peptide occupies residues 1–26; that stretch reads MKGKLLKGVLSLGVGLGALYSGTSAQ. Residues Cys150 and Cys186 are joined by a disulfide bond.

The protein belongs to the neutral sphingomyelinase family. The cofactor is Mg(2+). The N-terminus is blocked.

Its subcellular location is the secreted. The enzyme catalyses a sphingomyelin + H2O = phosphocholine + an N-acylsphing-4-enine + H(+). Activated by cobalt and manganese ions. Its function is as follows. Required, with sphingomyelinase, to effect target cell lysis (hemolysis). This is Sphingomyelinase C (cerB) from Bacillus cereus.